The chain runs to 67 residues: Large ribosomal subunit protein bL35 (67 aa).

The protein belongs to the bacterial ribosomal protein bL35 family.

The protein is Large ribosomal subunit protein bL35 of Rhizobium etli (strain CIAT 652).